We begin with the raw amino-acid sequence, 274 residues long: Receptor-like protein 44 (274 aa).

The N-terminal stretch at 1–24 (MTRSHRLLLLLLLIFQTAQRLTTA) is a signal peptide. The Extracellular segment spans residues 25 to 223 (DPNDEACLKN…PLQEMMMKSK (199 aa)). N-linked (GlcNAc...) asparagine glycosylation is found at N48, N82, and N95. LRR repeat units lie at residues 96 to 121 (CTNLQSLDLSSNQISGVIPPEIQYLV), 123 to 144 (LAVLNLSSNHLSGEITPQLALC), 145 to 168 (AYLNVIDLHDNELSGQIPQQLGLL), and 169 to 192 (ARLSAFDVSNNKLSGQIPTYLSNR). N127 is a glycosylation site (N-linked (GlcNAc...) asparagine). N-linked (GlcNAc...) asparagine glycans are attached at residues N191 and N200. Residues 224-244 (GLSVMAIVGIGLGSGIASLMI) form a helical membrane-spanning segment. At 245 to 274 (SFTGVCLWLRITEKKIVEEEGKISQSMPDY) the chain is on the cytoplasmic side.

It belongs to the RLP family.

Its subcellular location is the cell membrane. In Arabidopsis thaliana (Mouse-ear cress), this protein is Receptor-like protein 44.